Reading from the N-terminus, the 331-residue chain is Ketol-acid reductoisomerase (NADP(+)) (331 aa).

One can recognise a KARI N-terminal Rossmann domain in the interval 2-182; it reads AKMYYDSDCN…GAGRAGILET (181 aa). Residues 25-28, serine 51, and 83-86 each bind NADP(+); these read YGSQ and DEKQ. Histidine 108 is a catalytic residue. Glycine 134 contacts NADP(+). Positions 183-329 constitute a KARI C-terminal knotted domain; sequence TFREETETDL…AELRKMMSWL (147 aa). Residues aspartate 191, glutamate 195, glutamate 227, and glutamate 231 each coordinate Mg(2+). Residue serine 252 participates in substrate binding.

The protein belongs to the ketol-acid reductoisomerase family. Mg(2+) serves as cofactor.

The catalysed reaction is (2R)-2,3-dihydroxy-3-methylbutanoate + NADP(+) = (2S)-2-acetolactate + NADPH + H(+). It carries out the reaction (2R,3R)-2,3-dihydroxy-3-methylpentanoate + NADP(+) = (S)-2-ethyl-2-hydroxy-3-oxobutanoate + NADPH + H(+). It functions in the pathway amino-acid biosynthesis; L-isoleucine biosynthesis; L-isoleucine from 2-oxobutanoate: step 2/4. The protein operates within amino-acid biosynthesis; L-valine biosynthesis; L-valine from pyruvate: step 2/4. Functionally, involved in the biosynthesis of branched-chain amino acids (BCAA). Catalyzes an alkyl-migration followed by a ketol-acid reduction of (S)-2-acetolactate (S2AL) to yield (R)-2,3-dihydroxy-isovalerate. In the isomerase reaction, S2AL is rearranged via a Mg-dependent methyl migration to produce 3-hydroxy-3-methyl-2-ketobutyrate (HMKB). In the reductase reaction, this 2-ketoacid undergoes a metal-dependent reduction by NADPH to yield (R)-2,3-dihydroxy-isovalerate. This chain is Ketol-acid reductoisomerase (NADP(+)), found in Ruminiclostridium cellulolyticum (strain ATCC 35319 / DSM 5812 / JCM 6584 / H10) (Clostridium cellulolyticum).